We begin with the raw amino-acid sequence, 68 residues long: Large ribosomal subunit protein uL29 (68 aa).

It belongs to the universal ribosomal protein uL29 family.

In Archaeoglobus fulgidus (strain ATCC 49558 / DSM 4304 / JCM 9628 / NBRC 100126 / VC-16), this protein is Large ribosomal subunit protein uL29 (rpl29).